The primary structure comprises 393 residues: 4-hydroxyphenylpyruvate dioxygenase (393 aa).

Thr-2 carries the post-translational modification N-acetylthreonine. VOC domains are found at residues 18 to 149 (HFHS…LVEK) and 180 to 338 (MIDH…IFTK). Lys-132 bears the N6-succinyllysine mark. His-183 serves as a coordination point for Fe cation. Residues Ser-211, Ser-226, and Ser-250 each carry the phosphoserine modification. Residues His-266 and Glu-349 each coordinate Fe cation.

This sequence belongs to the 4HPPD family. Homodimer. It depends on Fe cation as a cofactor.

The protein localises to the cytoplasm. It localises to the endoplasmic reticulum membrane. The protein resides in the golgi apparatus membrane. It catalyses the reaction 3-(4-hydroxyphenyl)pyruvate + O2 = homogentisate + CO2. It functions in the pathway amino-acid degradation; L-phenylalanine degradation; acetoacetate and fumarate from L-phenylalanine: step 3/6. Catalyzes the conversion of 4-hydroxyphenylpyruvic acid to homogentisic acid, one of the steps in tyrosine catabolism. The polypeptide is 4-hydroxyphenylpyruvate dioxygenase (HPD) (Homo sapiens (Human)).